The chain runs to 673 residues: uncharacterized protein (673 aa).

The N-terminal stretch at 1-24 is a signal peptide; it reads MKIHNIIKIIIVVCLEGFALTSFA. 6 consecutive transmembrane segments (helical) span residues 224-244, 253-273, 410-430, 436-456, 469-489, and 562-582; these read NAIGAALILYVMFFAFNMVLN, IALFVIKLLFVTYFSIGLGPL, IILISGLVFAVIFLSILLYFI, CMITIYVMTYVSPIFIPMMLF, VSLSCALQPAVVAGFIALLIT, and VVSILAELLCVLVFSVIFYYF. Residues 624–673 are disordered; sequence AQATQGKPPSSGDMPGDGGSKRSEGQKGDDSFISSGGNSSGDSLSSSGGK. Positions 642–653 are enriched in basic and acidic residues; the sequence is GSKRSEGQKGDD. The span at 654 to 673 shows a compositional bias: low complexity; the sequence is SFISSGGNSSGDSLSSSGGK.

Belongs to the TrbL/VirB6 family.

The protein localises to the cell membrane. This is an uncharacterized protein from Rickettsia bellii (strain RML369-C).